A 76-amino-acid polypeptide reads, in one-letter code: Putative membrane protein insertion efficiency factor (76 aa).

This sequence belongs to the UPF0161 family.

It localises to the cell inner membrane. Functionally, could be involved in insertion of integral membrane proteins into the membrane. This chain is Putative membrane protein insertion efficiency factor, found in Anaeromyxobacter dehalogenans (strain 2CP-C).